The primary structure comprises 323 residues: Aspartate carbamoyltransferase catalytic subunit (323 aa).

Positions 71 and 72 each coordinate carbamoyl phosphate. Lys99 is an L-aspartate binding site. Carbamoyl phosphate-binding residues include Arg121, His151, and Gln154. Arg184 and Arg239 together coordinate L-aspartate. Carbamoyl phosphate-binding residues include Gly280 and Pro281.

The protein belongs to the aspartate/ornithine carbamoyltransferase superfamily. ATCase family. Heterododecamer (2C3:3R2) of six catalytic PyrB chains organized as two trimers (C3), and six regulatory PyrI chains organized as three dimers (R2).

The catalysed reaction is carbamoyl phosphate + L-aspartate = N-carbamoyl-L-aspartate + phosphate + H(+). It participates in pyrimidine metabolism; UMP biosynthesis via de novo pathway; (S)-dihydroorotate from bicarbonate: step 2/3. Functionally, catalyzes the condensation of carbamoyl phosphate and aspartate to form carbamoyl aspartate and inorganic phosphate, the committed step in the de novo pyrimidine nucleotide biosynthesis pathway. The chain is Aspartate carbamoyltransferase catalytic subunit from Cupriavidus pinatubonensis (strain JMP 134 / LMG 1197) (Cupriavidus necator (strain JMP 134)).